Consider the following 168-residue polypeptide: RNA pyrophosphohydrolase (168 aa).

The 152-residue stretch at 8–159 (PYRTCVGVML…KRPVYERVVK (152 aa)) folds into the Nudix hydrolase domain. The Nudix box motif lies at 47 to 68 (GGVDPGEDTWKAAKRELYEETS).

Belongs to the Nudix hydrolase family. RppH subfamily. It depends on a divalent metal cation as a cofactor.

Accelerates the degradation of transcripts by removing pyrophosphate from the 5'-end of triphosphorylated RNA, leading to a more labile monophosphorylated state that can stimulate subsequent ribonuclease cleavage. The polypeptide is RNA pyrophosphohydrolase (Rhodopseudomonas palustris (strain ATCC BAA-98 / CGA009)).